Here is a 176-residue protein sequence, read N- to C-terminus: Cytochrome c-552 (176 aa).

Residues 12 to 32 traverse the membrane as a helical; Signal-anchor segment; it reads GALIGSLLFLLLMSWAASGIF. Cys-90, Cys-93, His-94, Met-126, and Met-154 together coordinate heme c.

In terms of processing, binds 1 heme c group covalently per subunit.

It localises to the cell membrane. In terms of biological role, mediates the electron transport between the cytochrome bc1 complex and cytochrome-c oxidase. The polypeptide is Cytochrome c-552 (cycM) (Paracoccus denitrificans).